The primary structure comprises 440 residues: APO protein 2, chloroplastic (440 aa).

Residues Met1–Leu62 constitute a chloroplast transit peptide. The segment covering Ala106–Asp115 has biased composition (basic and acidic residues). A disordered region spans residues Ala106 to Asn126. 2 consecutive APO domains span residues Ala162–Glu247 and Val332–Glu417.

It belongs to the APO family.

The protein resides in the plastid. It localises to the chloroplast. In terms of biological role, may be involved in the stable assembly of several 4Fe-4S cluster-containing complexes of chloroplasts. This is APO protein 2, chloroplastic (APO2) from Arabidopsis thaliana (Mouse-ear cress).